A 633-amino-acid chain; its full sequence is Proline-rich receptor-like protein kinase PERK4 (633 aa).

The segment covering 1–29 (MASSPESAPPTNSTSSPSPPSNTNSTTSS) has biased composition (low complexity). Residues 1-145 (MASSPESAPP…GSSGGGGGGR (145 aa)) form a disordered region. At 1 to 151 (MASSPESAPP…GGGRSNTNTA (151 aa)) the chain is on the extracellular side. N-linked (GlcNAc...) asparagine glycans are attached at residues asparagine 12 and asparagine 24. Composition is skewed to pro residues over residues 30–41 (PPAPSPPSPTPP) and 48–65 (SPPPDSTSPPAPQAPNPP). An N-linked (GlcNAc...) asparagine glycan is attached at asparagine 66. The span at 77-90 (QGGGGERGNGGNNG) shows a compositional bias: gly residues. Over residues 106 to 135 (SRSNGDNGGSRSSPPGDTGGSRSDNPPSSG) the composition is skewed to low complexity. The span at 136–145 (GSSGGGGGGR) shows a compositional bias: gly residues. The helical transmembrane segment at 152–172 (IIVGVLVGAGLLMIVLIIVCL) threads the bilayer. Over 173 to 633 (RRKKKRKDSF…MGTKSPTPPK (461 aa)) the chain is Cytoplasmic. Over residues 193–222 (QYYGNNNNNNASQNYPNWHLNSQGQNQQST) the composition is skewed to low complexity. The disordered stretch occupies residues 193 to 255 (QYYGNNNNNN…SMYSGPSRPV (63 aa)). Threonine 273 is subject to Phosphothreonine. Residues 284-562 (FTDANLLGQG…VRALEGEVSL (279 aa)) enclose the Protein kinase domain. ATP is bound by residues 290–298 (LGQGGFGYV) and lysine 312. Tyrosine 357 is modified (phosphotyrosine). Aspartate 408 (proton acceptor) is an active-site residue. Residue serine 441 is modified to Phosphoserine. Threonine 442 and threonine 447 each carry phosphothreonine. Tyrosine 455 bears the Phosphotyrosine mark. Positions 608-619 (FPVSDCEGTSSN) are enriched in polar residues. Residues 608–633 (FPVSDCEGTSSNDSRDMGTKSPTPPK) are disordered.

It belongs to the protein kinase superfamily. Ser/Thr protein kinase family. Mostly expressed in inflorescence bolts. Also present in roots, stems, germinated seeds, cotyledons, pollen, stamen and stigma.

The protein localises to the cell membrane. It carries out the reaction L-seryl-[protein] + ATP = O-phospho-L-seryl-[protein] + ADP + H(+). The catalysed reaction is L-threonyl-[protein] + ATP = O-phospho-L-threonyl-[protein] + ADP + H(+). Its activity is regulated as follows. Activated by ABA and Ca(2+). Required during abscisic acid (ABA)-mediated activation of Ca(2+) channels. Regulates ABA signaling pathways. Modulates the expression of genes related to cell elongation and ABA signaling during root growth. This chain is Proline-rich receptor-like protein kinase PERK4 (PERK4), found in Arabidopsis thaliana (Mouse-ear cress).